The sequence spans 528 residues: Glutamyl-tRNA(Gln) amidotransferase subunit B, mitochondrial (528 aa).

The N-terminal 21 residues, M1–Y21, are a transit peptide targeting the mitochondrion.

Belongs to the GatB/GatE family. GatB subfamily. As to quaternary structure, subunit of the heterotrimeric GatCAB amidotransferase (AdT) complex, composed of A, B and C subunits.

It localises to the mitochondrion. It catalyses the reaction L-glutamyl-tRNA(Gln) + L-glutamine + ATP + H2O = L-glutaminyl-tRNA(Gln) + L-glutamate + ADP + phosphate + H(+). In terms of biological role, allows the formation of correctly charged Gln-tRNA(Gln) through the transamidation of misacylated Glu-tRNA(Gln) in the mitochondria. The reaction takes place in the presence of glutamine and ATP through an activated gamma-phospho-Glu-tRNA(Gln). The chain is Glutamyl-tRNA(Gln) amidotransferase subunit B, mitochondrial from Aedes aegypti (Yellowfever mosquito).